The primary structure comprises 87 residues: Small ribosomal subunit protein bS20 (87 aa).

Residues 1–22 form a disordered region; the sequence is MANSAQARKRARQSLKARAHNA. Basic residues predominate over residues 7–19; sequence ARKRARQSLKARA.

It belongs to the bacterial ribosomal protein bS20 family.

In terms of biological role, binds directly to 16S ribosomal RNA. This Laribacter hongkongensis (strain HLHK9) protein is Small ribosomal subunit protein bS20.